Here is a 536-residue protein sequence, read N- to C-terminus: Cytochrome c oxidase subunit 1 (536 aa).

A helical membrane pass occupies residues 19-39 (IGMTYLGFGMLSAMMGTGMSV). Ca(2+) is bound at residue Glu44. His67 serves as a coordination point for Fe(II)-heme a. The next 6 membrane-spanning stretches (helical) occupy residues 69–89 (LLMM…NFFL), 103–123 (LNNI…CSVL), 152–172 (AMFA…NFMV), 188–208 (PLFA…LPVL), 240–260 (LFWF…FGVM), and 273–293 (FGEM…FLVW). His246 contacts Cu cation. Residues 246–250 (HPEVY) constitute a cross-link (1'-histidyl-3'-tyrosine (His-Tyr)). Tyr250 is an O2 binding site. Cu cation is bound by residues His295 and His296. A run of 2 helical transmembrane segments spans residues 315–335 (MVIA…IYGG) and 341–361 (VPML…LTGV). Residues His373 and Asp374 each contribute to the Mg(2+) site. His381 contributes to the heme a3 binding site. His383 contacts Fe(II)-heme a. 2 helical membrane-spanning segments follow: residues 388–408 (MGAL…MFGL) and 418–438 (HFWL…FLGL). Pro446 contributes to the Ca(2+) binding site. Residues 461-481 (MGSAMSVMSVLVGLKSVLVQL) form a helical membrane-spanning segment.

The protein belongs to the heme-copper respiratory oxidase family. As to quaternary structure, component of the cytochrome c oxidase (complex IV, CIV), a multisubunit enzyme composed of a catalytic core of 3 subunits and several supernumerary subunits. The complex exists as a monomer or a dimer and forms supercomplexes (SCs) in the inner mitochondrial membrane with ubiquinol-cytochrome c oxidoreductase (cytochrome b-c1 complex, complex III, CIII). It depends on heme as a cofactor. Requires Cu cation as cofactor.

The protein localises to the mitochondrion inner membrane. The enzyme catalyses 4 Fe(II)-[cytochrome c] + O2 + 8 H(+)(in) = 4 Fe(III)-[cytochrome c] + 2 H2O + 4 H(+)(out). It functions in the pathway energy metabolism; oxidative phosphorylation. In terms of biological role, component of the cytochrome c oxidase, the last enzyme in the mitochondrial electron transport chain which drives oxidative phosphorylation. The respiratory chain contains 3 multisubunit complexes succinate dehydrogenase (complex II, CII), ubiquinol-cytochrome c oxidoreductase (cytochrome b-c1 complex, complex III, CIII) and cytochrome c oxidase (complex IV, CIV), that cooperate to transfer electrons derived from NADH and succinate to molecular oxygen, creating an electrochemical gradient over the inner membrane that drives transmembrane transport and the ATP synthase. Cytochrome c oxidase is the component of the respiratory chain that catalyzes the reduction of oxygen to water. Electrons originating from reduced cytochrome c in the intermembrane space (IMS) are transferred via the dinuclear copper A center (CU(A)) of subunit 2 and heme A of subunit 1 to the active site in subunit 1, a binuclear center (BNC) formed by heme A3 and copper B (CU(B)). The BNC reduces molecular oxygen to 2 water molecules using 4 electrons from cytochrome c in the IMS and 4 protons from the mitochondrial matrix. The sequence is that of Cytochrome c oxidase subunit 1 (COX1) from Debaryomyces hansenii (strain ATCC 36239 / CBS 767 / BCRC 21394 / JCM 1990 / NBRC 0083 / IGC 2968) (Yeast).